A 96-amino-acid polypeptide reads, in one-letter code: Co-chaperonin GroES (96 aa).

Belongs to the GroES chaperonin family. In terms of assembly, heptamer of 7 subunits arranged in a ring. Interacts with the chaperonin GroEL.

The protein resides in the cytoplasm. In terms of biological role, together with the chaperonin GroEL, plays an essential role in assisting protein folding. The GroEL-GroES system forms a nano-cage that allows encapsulation of the non-native substrate proteins and provides a physical environment optimized to promote and accelerate protein folding. GroES binds to the apical surface of the GroEL ring, thereby capping the opening of the GroEL channel. The chain is Co-chaperonin GroES from Legionella jeonii.